The sequence spans 599 residues: Elongation factor 4 (599 aa).

In terms of domain architecture, tr-type G spans 5 to 187; it reads SHIRNFSIIA…RLVTAIPAPE (183 aa). Residues 17-22 and 134-137 contribute to the GTP site; these read DHGKST and NKMD.

The protein belongs to the TRAFAC class translation factor GTPase superfamily. Classic translation factor GTPase family. LepA subfamily.

It is found in the cell inner membrane. It catalyses the reaction GTP + H2O = GDP + phosphate + H(+). Its function is as follows. Required for accurate and efficient protein synthesis under certain stress conditions. May act as a fidelity factor of the translation reaction, by catalyzing a one-codon backward translocation of tRNAs on improperly translocated ribosomes. Back-translocation proceeds from a post-translocation (POST) complex to a pre-translocation (PRE) complex, thus giving elongation factor G a second chance to translocate the tRNAs correctly. Binds to ribosomes in a GTP-dependent manner. The protein is Elongation factor 4 of Pseudomonas aeruginosa (strain LESB58).